A 418-amino-acid polypeptide reads, in one-letter code: Hydroxysteroid dehydrogenase-like protein 2 (418 aa).

Residues 17–23, K42, and D74 each bind NADP(+); that span reads GASRGIG. At K42 the chain carries N6-(2-hydroxyisobutyryl)lysine. K116 bears the N6-acetyllysine mark. The Proton acceptor role is filled by Y168. K172 serves as a coordination point for NADP(+). Residues 287-310 form a disordered region; sequence STGAVPEFKEEKPQPQPKPRSGAV. The 110-residue stretch at 306-415 folds into the SCP2 domain; it reads RSGAVEETFR…KLEKLMNQMN (110 aa). Residue K318 is modified to N6-succinyllysine.

This sequence belongs to the short-chain dehydrogenases/reductases (SDR) family.

The protein resides in the peroxisome. It is found in the mitochondrion. Has apparently no steroid dehydrogenase activity. Controls bile acid (BA) and lipid metabolism in response to nutritional cues. The chain is Hydroxysteroid dehydrogenase-like protein 2 (HSDL2) from Pongo abelii (Sumatran orangutan).